Here is a 100-residue protein sequence, read N- to C-terminus: ESAT-6-like protein EsxT (100 aa).

It belongs to the WXG100 family. ESAT-6 subfamily. As to quaternary structure, forms a tight 1:1 complex with EsxU.

It is found in the secreted. The chain is ESAT-6-like protein EsxT from Mycobacterium tuberculosis (strain CDC 1551 / Oshkosh).